The sequence spans 178 residues: Cytochrome b6-f complex iron-sulfur subunit (178 aa).

Residues 20-42 (LLTFGTATGVALGALYPVANFFM) form a helical membrane-spanning segment. Residues 71 to 161 (NHPAGDRSLV…IDIDDDNVLV (91 aa)) form the Rieske domain. Residues C107, H109, C125, and H128 each contribute to the [2Fe-2S] cluster site. An intrachain disulfide couples C112 to C127.

Belongs to the Rieske iron-sulfur protein family. The 4 large subunits of the cytochrome b6-f complex are cytochrome b6, subunit IV (17 kDa polypeptide, PetD), cytochrome f and the Rieske protein, while the 4 small subunits are PetG, PetL, PetM and PetN. The complex functions as a dimer. Requires [2Fe-2S] cluster as cofactor.

It is found in the cellular thylakoid membrane. The enzyme catalyses 2 oxidized [plastocyanin] + a plastoquinol + 2 H(+)(in) = 2 reduced [plastocyanin] + a plastoquinone + 4 H(+)(out). In terms of biological role, component of the cytochrome b6-f complex, which mediates electron transfer between photosystem II (PSII) and photosystem I (PSI), cyclic electron flow around PSI, and state transitions. In Prochlorococcus marinus (strain SARG / CCMP1375 / SS120), this protein is Cytochrome b6-f complex iron-sulfur subunit.